A 384-amino-acid chain; its full sequence is Spermidine/putrescine import ATP-binding protein PotA (384 aa).

The region spanning 6 to 238 is the ABC transporter domain; it reads ITFNNVSKTF…PINHFVANFI (233 aa). Position 40–47 (40–47) interacts with ATP; that stretch reads GASGSGKS.

This sequence belongs to the ABC transporter superfamily. Spermidine/putrescine importer (TC 3.A.1.11.1) family. The complex is composed of two ATP-binding proteins (PotA), two transmembrane proteins (PotB and PotC) and a solute-binding protein (PotD).

The protein localises to the cell membrane. The enzyme catalyses ATP + H2O + polyamine-[polyamine-binding protein]Side 1 = ADP + phosphate + polyamineSide 2 + [polyamine-binding protein]Side 1.. Part of the ABC transporter complex PotABCD involved in spermidine/putrescine import. Responsible for energy coupling to the transport system. The protein is Spermidine/putrescine import ATP-binding protein PotA of Streptococcus pyogenes serotype M12 (strain MGAS2096).